The chain runs to 441 residues: DILAAFRVTPQPGVPPEEAGAAVAAESSTGTWTTVWTDGLTSLDRYKGRCYDIEPVPGEXXXXXXXXXXXXDLFEEGSVTNMFTSXVGNVFGFXXXRALRLEDLRIPPAYTKTFQGPPHGIQVERDKLNKYGRPILGCTIKPKLGLSAKNYGRAVYECLRGGLDFTKDDENVNSQPFMRWRDRFLFCAEAIYKSQAETGEIKGHYLNATAGTCEEMIKRAVFARELGVPIVMHDYLTGGFTANTTLAHYCRDNGLLFHIHRAMHAVIDRQKNHGMHFRVLAKALRMSGGDHVHSGTVVGKLEGERDITLGFVDLLRDDYVEKDRSRGIYFTQDWVSLPGVLPVASGGIHVWHMPALTEIFGDDSVLQFGGGTLGHPWGNRPGAXXNRVALEACVKARNEGRDLAREGNEIIREAAKWSPELAAACEVWKEIKFEFEAMDTI.

The substrate site is built by Asn89 and Thr139. The active-site Proton acceptor is Lys141. Lys143 lines the substrate pocket. Mg(2+) contacts are provided by Lys167, Asp169, and Glu170. Lys167 is subject to N6-carboxylysine. His260 functions as the Proton acceptor in the catalytic mechanism. Residues Arg261, His293, and Ser345 each contribute to the substrate site.

It belongs to the RuBisCO large chain family. Type I subfamily. Heterohexadecamer of 8 large chains and 8 small chains; disulfide-linked. The disulfide link is formed within the large subunit homodimers. Requires Mg(2+) as cofactor. Post-translationally, the disulfide bond which can form in the large chain dimeric partners within the hexadecamer appears to be associated with oxidative stress and protein turnover.

It localises to the plastid. Its subcellular location is the chloroplast. The enzyme catalyses 2 (2R)-3-phosphoglycerate + 2 H(+) = D-ribulose 1,5-bisphosphate + CO2 + H2O. It carries out the reaction D-ribulose 1,5-bisphosphate + O2 = 2-phosphoglycolate + (2R)-3-phosphoglycerate + 2 H(+). Functionally, ruBisCO catalyzes two reactions: the carboxylation of D-ribulose 1,5-bisphosphate, the primary event in carbon dioxide fixation, as well as the oxidative fragmentation of the pentose substrate in the photorespiration process. Both reactions occur simultaneously and in competition at the same active site. The chain is Ribulose bisphosphate carboxylase large chain from Viola sororia (Woolly blue violet).